The following is a 323-amino-acid chain: Transcription factor MafB (323 aa).

A Glycyl lysine isopeptide (Lys-Gly) (interchain with G-Cter in SUMO) cross-link involves residue Lys32. The segment covering 34 to 43 (EPLGRAERPG) has biased composition (basic and acidic residues). Disordered stretches follow at residues 34 to 78 (EPLG…PTEP) and 116 to 210 (PVPQ…VEDR). Positions 54–77 (SVSSTPLSTPCSSVPSSPSFSPTE) are enriched in low complexity. Basic residues-rich tracts occupy residues 129 to 143 (SAHHHHHHHHPHPHH) and 159 to 168 (AHPHHHHHHQ). Low complexity predominate over residues 192–201 (PHATAAATAA). The tract at residues 238–263 (RLKQKRRTLKNRGYAQSCRYKRVQQK) is basic motif. The bZIP domain maps to 238–301 (RLKQKRRTLK…DAYKVKCEKL (64 aa)). Positions 266-287 (LENEKTQLIQQVEQLKQEVSRL) are leucine-zipper. A Glycyl lysine isopeptide (Lys-Gly) (interchain with G-Cter in SUMO) cross-link involves residue Lys297.

Belongs to the bZIP family. Maf subfamily. Homodimer or heterodimer with other bHLH-Zip transcription factors. Forms homodimers and heterodimers with FOS, FOSB and FOSL2, but not with JUN proteins (JUN, JUNB and JUND). Interacts with the intracellular cytoplasmic domain of LRP1 (LRPICD); the interaction results in a moderate reduction of MAFB transcriptional potential. Binds DNA as a homodimer or a heterodimer. Interacts with PAX6; the interaction is direct. Interacts with ETS1 and LRP1. In terms of processing, sumoylated. Sumoylation on Lys-32 and Lys-297 stimulates its transcriptional repression activity and promotes macrophage differentiation from myeloid progenitors. In terms of tissue distribution, expressed in pancreatic alpha-cells (glucagon-positive cells), in podocytes of the kidney and macrophages (at protein level). Most abundant in kidney, gut, lung and brain.

It is found in the nucleus. Its function is as follows. Acts as a transcriptional activator or repressor. Plays a pivotal role in regulating lineage-specific hematopoiesis by repressing ETS1-mediated transcription of erythroid-specific genes in myeloid cells. Required for monocytic, macrophage, osteoclast, podocyte and islet beta cell differentiation. Involved in renal tubule survival and F4/80 maturation. Activates the insulin and glucagon promoters. Together with PAX6, transactivates weakly the glucagon gene promoter through the G1 element. SUMO modification controls its transcriptional activity and ability to specify macrophage fate. Binds element G1 on the glucagon promoter. Involved either as an oncogene or as a tumor suppressor, depending on the cell context. Required for the transcriptional activation of HOXB3 in the rhombomere r5 in the hindbrain. This is Transcription factor MafB (Mafb) from Mus musculus (Mouse).